We begin with the raw amino-acid sequence, 375 residues long: MKITSTIPAVLLGLAPLSAAVSVSGSAEGFASGVTGGGDAEAQIPSDIDELKEWLTDDTPRVIVLDKEYDFTESEGTTSGTVCASWGTGSGCQKIIQDDCGDSPSSQATWYTAGTTGIDVASDKTILGDGDKGVIKGKGLRFRDGVSNIIVQNIEISDLNPEYVWGGDALYFDGSDLIWIDHVTTARTGRQHYTFGYETNTRITLSNNFINGETTYSTGCDGYTYWTFEMVGEADQITLQNNYIYMTAGRSPALSGGTLLHAVNNVWEKNNGHALEGGDAGARGIFEGNAWIGVSTIVGDYAGRLFNAPDSSSAGDCESALGRACEVNAVSDSGDLTAYTDTSFFSDFSGLTIAPATSATDAQSSVPNNAGMGKL.

The first 20 residues, 1–20 (MKITSTIPAVLLGLAPLSAA), serve as a signal peptide directing secretion. Cystine bridges form between C83-C100 and C92-C220. The active site involves R250. A disulfide bond links C317 and C325.

This sequence belongs to the polysaccharide lyase 1 family.

Its subcellular location is the secreted. It catalyses the reaction Eliminative cleavage of (1-&gt;4)-alpha-D-galacturonan methyl ester to give oligosaccharides with 4-deoxy-6-O-methyl-alpha-D-galact-4-enuronosyl groups at their non-reducing ends.. Its function is as follows. Pectinolytic enzymes consist of four classes of enzymes: pectin lyase, polygalacturonase, pectin methylesterase and rhamnogalacturonase. Among pectinolytic enzymes, pectin lyase is the most important in depolymerization of pectin, since it cleaves internal glycosidic bonds of highly methylated pectins. This is Probable pectin lyase C (pelC) from Aspergillus oryzae (strain ATCC 42149 / RIB 40) (Yellow koji mold).